Here is a 187-residue protein sequence, read N- to C-terminus: Adenylate kinase (187 aa).

11–16 (GAGKGT) serves as a coordination point for ATP. The tract at residues 31-60 (STGDILREAVKNQTPMGIEAKRYMDAGDLV) is NMP. AMP is bound by residues Thr32, Arg37, 58–60 (DLV), 86–89 (GFPR), and Gln93. Residues 127–137 (GRAEIEGRADD) are LID. Arg128 contacts ATP. Arg134 and Arg145 together coordinate AMP. Gly173 is an ATP binding site.

This sequence belongs to the adenylate kinase family. Monomer.

The protein localises to the cytoplasm. The catalysed reaction is AMP + ATP = 2 ADP. It participates in purine metabolism; AMP biosynthesis via salvage pathway; AMP from ADP: step 1/1. Its function is as follows. Catalyzes the reversible transfer of the terminal phosphate group between ATP and AMP. Plays an important role in cellular energy homeostasis and in adenine nucleotide metabolism. The chain is Adenylate kinase from Leptospira borgpetersenii serovar Hardjo-bovis (strain JB197).